The primary structure comprises 352 residues: Heat-inducible transcription repressor HrcA (352 aa).

This sequence belongs to the HrcA family.

Its function is as follows. Negative regulator of class I heat shock genes (grpE-dnaK-dnaJ and groELS operons). Prevents heat-shock induction of these operons. This Chlorobium phaeobacteroides (strain BS1) protein is Heat-inducible transcription repressor HrcA.